We begin with the raw amino-acid sequence, 282 residues long: Pantothenate synthetase (282 aa).

Residue 31 to 38 coordinates ATP; the sequence is MGALHDGH. H38 (proton donor) is an active-site residue. Residue Q62 participates in (R)-pantoate binding. Q62 contacts beta-alanine. 148–151 contacts ATP; sequence GKKD. Position 154 (Q154) interacts with (R)-pantoate. ATP contacts are provided by residues V177 and 185–188; that span reads KSSR.

Belongs to the pantothenate synthetase family. In terms of assembly, homodimer.

The protein resides in the cytoplasm. The catalysed reaction is (R)-pantoate + beta-alanine + ATP = (R)-pantothenate + AMP + diphosphate + H(+). Its pathway is cofactor biosynthesis; (R)-pantothenate biosynthesis; (R)-pantothenate from (R)-pantoate and beta-alanine: step 1/1. Its function is as follows. Catalyzes the condensation of pantoate with beta-alanine in an ATP-dependent reaction via a pantoyl-adenylate intermediate. The polypeptide is Pantothenate synthetase (Staphylococcus saprophyticus subsp. saprophyticus (strain ATCC 15305 / DSM 20229 / NCIMB 8711 / NCTC 7292 / S-41)).